We begin with the raw amino-acid sequence, 27 residues long: Paragonial peptide PS-1 (27 aa).

Over residues 1–17 the composition is skewed to low complexity; the sequence is DVPSANANANNQRTAAA. The interval 1-27 is disordered; sequence DVPSANANANNQRTAAAKPQANAEASS.

As to expression, main cells of the accessory glands of males (paragonial gland).

It localises to the secreted. Functionally, represses female sexual receptivity and stimulates oviposition. This peptide has a low activity. The chain is Paragonial peptide PS-1 (PapC) from Drosophila funebris (Fruit fly).